We begin with the raw amino-acid sequence, 209 residues long: Orotate phosphoribosyltransferase (209 aa).

5-phospho-alpha-D-ribose 1-diphosphate contacts are provided by residues R96, K100, H102, and 122–130; that span reads EDLISTGGS. Position 126 (S126) interacts with orotate.

This sequence belongs to the purine/pyrimidine phosphoribosyltransferase family. PyrE subfamily. In terms of assembly, homodimer. Requires Mg(2+) as cofactor.

It catalyses the reaction orotidine 5'-phosphate + diphosphate = orotate + 5-phospho-alpha-D-ribose 1-diphosphate. The protein operates within pyrimidine metabolism; UMP biosynthesis via de novo pathway; UMP from orotate: step 1/2. Catalyzes the transfer of a ribosyl phosphate group from 5-phosphoribose 1-diphosphate to orotate, leading to the formation of orotidine monophosphate (OMP). This Lactococcus lactis subsp. cremoris (strain MG1363) protein is Orotate phosphoribosyltransferase.